A 311-amino-acid chain; its full sequence is tRNA dimethylallyltransferase (311 aa).

Position 12–19 (12–19) interacts with ATP; it reads GPTASGKT. 14 to 19 contributes to the substrate binding site; the sequence is TASGKT. Interaction with substrate tRNA regions lie at residues 37-40 and 161-165; these read DSAM and QRIQR.

This sequence belongs to the IPP transferase family. As to quaternary structure, monomer. Mg(2+) serves as cofactor.

The catalysed reaction is adenosine(37) in tRNA + dimethylallyl diphosphate = N(6)-dimethylallyladenosine(37) in tRNA + diphosphate. Its function is as follows. Catalyzes the transfer of a dimethylallyl group onto the adenine at position 37 in tRNAs that read codons beginning with uridine, leading to the formation of N6-(dimethylallyl)adenosine (i(6)A). The protein is tRNA dimethylallyltransferase of Coxiella burnetii (strain Dugway 5J108-111).